The following is a 323-amino-acid chain: Glucokinase (323 aa).

Residue 8 to 13 (GDVGGT) coordinates ATP.

It belongs to the bacterial glucokinase family.

It localises to the cytoplasm. The enzyme catalyses D-glucose + ATP = D-glucose 6-phosphate + ADP + H(+). The polypeptide is Glucokinase (Yersinia enterocolitica serotype O:8 / biotype 1B (strain NCTC 13174 / 8081)).